A 510-amino-acid polypeptide reads, in one-letter code: Bifunctional purine biosynthesis protein PurH (510 aa).

The 142-residue stretch at 1 to 142 (MRALLSVSDK…KNYKDVMVLC (142 aa)) folds into the MGS-like domain.

The protein belongs to the PurH family.

The enzyme catalyses (6R)-10-formyltetrahydrofolate + 5-amino-1-(5-phospho-beta-D-ribosyl)imidazole-4-carboxamide = 5-formamido-1-(5-phospho-D-ribosyl)imidazole-4-carboxamide + (6S)-5,6,7,8-tetrahydrofolate. It carries out the reaction IMP + H2O = 5-formamido-1-(5-phospho-D-ribosyl)imidazole-4-carboxamide. Its pathway is purine metabolism; IMP biosynthesis via de novo pathway; 5-formamido-1-(5-phospho-D-ribosyl)imidazole-4-carboxamide from 5-amino-1-(5-phospho-D-ribosyl)imidazole-4-carboxamide (10-formyl THF route): step 1/1. The protein operates within purine metabolism; IMP biosynthesis via de novo pathway; IMP from 5-formamido-1-(5-phospho-D-ribosyl)imidazole-4-carboxamide: step 1/1. This chain is Bifunctional purine biosynthesis protein PurH, found in Campylobacter jejuni subsp. jejuni serotype O:2 (strain ATCC 700819 / NCTC 11168).